The primary structure comprises 226 residues: Ribonuclease 3 (226 aa).

In terms of domain architecture, RNase III spans 6-128; the sequence is INKLQRKLGY…LIGGVFLDSD (123 aa). Residue Glu41 participates in Mg(2+) binding. Residue Asp45 is part of the active site. Residues Asp114 and Glu117 each coordinate Mg(2+). Glu117 is a catalytic residue. A DRBM domain is found at 155–225; sequence DPKTRLQEYL…AEQALIKLGL (71 aa).

It belongs to the ribonuclease III family. Homodimer. Mg(2+) serves as cofactor.

It localises to the cytoplasm. It carries out the reaction Endonucleolytic cleavage to 5'-phosphomonoester.. Digests double-stranded RNA. Involved in the processing of primary rRNA transcript to yield the immediate precursors to the large and small rRNAs (23S and 16S). Processes some mRNAs, and tRNAs when they are encoded in the rRNA operon. Processes pre-crRNA and tracrRNA of type II CRISPR loci if present in the organism. The chain is Ribonuclease 3 (rnc) from Pantoea ananatis (strain LMG 20103).